The following is a 1134-amino-acid chain: Error-prone DNA polymerase (1134 aa).

Residues 1–33 form a disordered region; that stretch reads MSYHNPPIPWRELEGRISGRPAPHGHQESHADQ.

The protein belongs to the DNA polymerase type-C family. DnaE2 subfamily.

It localises to the cytoplasm. The enzyme catalyses DNA(n) + a 2'-deoxyribonucleoside 5'-triphosphate = DNA(n+1) + diphosphate. DNA polymerase involved in damage-induced mutagenesis and translesion synthesis (TLS). It is not the major replicative DNA polymerase. This chain is Error-prone DNA polymerase, found in Cutibacterium acnes (strain DSM 16379 / KPA171202) (Propionibacterium acnes).